The primary structure comprises 1042 residues: Ubiquitin carboxyl-terminal hydrolase 38 (1042 aa).

The 505-residue stretch at 445–949 (TGLINLGNTC…TAYVLLYKKQ (505 aa)) folds into the USP domain. Cys-454 (nucleophile) is an active-site residue. The active-site Proton acceptor is His-857.

Belongs to the peptidase C19 family. Interacts with isoform 1 of FBXW7; this interaction prevents FBXW7-mediated degradation of MYC. Highly expressed in skeletal muscle. Expressed in adrenal gland.

It localises to the cytoplasm. The protein resides in the nucleus. It catalyses the reaction Thiol-dependent hydrolysis of ester, thioester, amide, peptide and isopeptide bonds formed by the C-terminal Gly of ubiquitin (a 76-residue protein attached to proteins as an intracellular targeting signal).. Deubiquitinating enzyme that plays a role in various cellular processes, including DNA repair, cell cycle regulation, and immune response. Plays a role in the inhibition of type I interferon signaling by mediating the 'Lys-33' to 'Lys-48' ubiquitination transition of TBK1 leading to its degradation. Cleaves the ubiquitin chain from the histone demethylase LSD1/KDM1A and prevents it from degradation by the 26S proteasome, thus maintaining LSD1 protein level in cells. Plays a role in the DNA damage response by regulating the deacetylase activity of HDAC1. Mechanistically, removes the 'Lys-63'-linked ubiquitin chain promoting the deacetylase activity of HDAC1 in response to DNA damage. Also acts as a specific deubiquitinase of histone deacetylase 3/HDAC3 and cleaves its 'Lys-63'-linked ubiquitin chains to lower its histone deacetylase activity. Regulates MYC levels and cell proliferation via antagonizing ubiquitin E3 ligase FBXW7 thereby preventing MYC 'Lys-48'-linked ubiquitination and degradation. Participates in antiviral response by removing both 'Lys-48'-linked and 'Lys-63'-linked polyubiquitination of Zika virus envelope protein E. Constitutively associated with IL-33R/IL1RL1, deconjugates its 'Lys-27'-linked polyubiquitination resulting in its autophagic degradation. The protein is Ubiquitin carboxyl-terminal hydrolase 38 (USP38) of Homo sapiens (Human).